Reading from the N-terminus, the 413-residue chain is Enolase (413 aa).

Gln170 lines the (2R)-2-phosphoglycerate pocket. The Proton donor role is filled by Glu212. Mg(2+) is bound by residues Asp245, Glu286, and Asp313. (2R)-2-phosphoglycerate is bound by residues Lys338, Arg367, Ser368, and Lys389. Lys338 functions as the Proton acceptor in the catalytic mechanism.

This sequence belongs to the enolase family. The cofactor is Mg(2+).

The protein localises to the cytoplasm. It is found in the secreted. The protein resides in the cell surface. The catalysed reaction is (2R)-2-phosphoglycerate = phosphoenolpyruvate + H2O. The protein operates within carbohydrate degradation; glycolysis; pyruvate from D-glyceraldehyde 3-phosphate: step 4/5. Catalyzes the reversible conversion of 2-phosphoglycerate (2-PG) into phosphoenolpyruvate (PEP). It is essential for the degradation of carbohydrates via glycolysis. This Neorickettsia sennetsu (strain ATCC VR-367 / Miyayama) (Ehrlichia sennetsu) protein is Enolase.